The sequence spans 299 residues: Non-homologous end joining protein Ku (299 aa).

Positions 10–188 (ISFGLVHIPV…TEAVTDARLT (179 aa)) constitute a Ku domain. Disordered regions lie at residues 227-249 (AGEGKIEDVETDPGEEERKSADV) and 261-299 (AGKSSASKTRKPAAKDKVADKQSPKPKRPAVRKKTGKAS). Residues 273–283 (AAKDKVADKQS) are compositionally biased toward basic and acidic residues. The span at 284-299 (PKPKRPAVRKKTGKAS) shows a compositional bias: basic residues.

This sequence belongs to the prokaryotic Ku family. In terms of assembly, homodimer. Interacts with LigD.

Functionally, with LigD forms a non-homologous end joining (NHEJ) DNA repair enzyme, which repairs dsDNA breaks with reduced fidelity. Binds linear dsDNA with 5'- and 3'- overhangs but not closed circular dsDNA nor ssDNA. Recruits and stimulates the ligase activity of LigD. The sequence is that of Non-homologous end joining protein Ku from Pseudomonas syringae pv. tomato (strain ATCC BAA-871 / DC3000).